Reading from the N-terminus, the 1198-residue chain is Spindle-defective protein 5 (1198 aa).

Residues 1-10 (MEDNSVLNED) show a composition bias toward polar residues. The segment at 1-45 (MEDNSVLNEDSNLEHVEGQPRRSMSQPVLNVEGDKRTSSTSATQQ) is disordered. 5 coiled-coil regions span residues 67-381 (EENK…QLTG), 566-603 (HDVAVNVEQMQEKMSQIREALARLFERLKSSAALFEEI), 694-916 (KFTS…LSTS), 983-1035 (DELC…ENVP), and 1127-1175 (KNET…EFQD).

It is found in the cytoplasm. The protein resides in the cytoskeleton. Its subcellular location is the microtubule organizing center. The protein localises to the centrosome. Plays a central role in centrosome maturation and mitotic spindle assembly during the first division of the zygote. Required for the centrosomal localization of air-1 and zyg-9. Probably not required in late embryogenesis and during larval development. This chain is Spindle-defective protein 5 (spd-5), found in Caenorhabditis elegans.